The sequence spans 156 residues: Small ribosomal subunit protein uS7 (156 aa).

This sequence belongs to the universal ribosomal protein uS7 family. In terms of assembly, part of the 30S ribosomal subunit. Contacts proteins S9 and S11.

One of the primary rRNA binding proteins, it binds directly to 16S rRNA where it nucleates assembly of the head domain of the 30S subunit. Is located at the subunit interface close to the decoding center, probably blocks exit of the E-site tRNA. The chain is Small ribosomal subunit protein uS7 from Mycolicibacterium vanbaalenii (strain DSM 7251 / JCM 13017 / BCRC 16820 / KCTC 9966 / NRRL B-24157 / PYR-1) (Mycobacterium vanbaalenii).